The following is a 444-amino-acid chain: MKSDSPKTFHVKSFGCQMNVYDGERMAEMLGAEGYVPAADGADADLVVLNTCHIREKAAEKVYSDIGRLKRDDGSTPTIAVAGCVAQAEGAEIARRAPSVDVVVGPQAYHRLPELIARAERGEKAIDLDMPAESKFGALPKRSGNQRPTAFLTVQEGCDKFCTYCVVPYTRGAEISRPFADLIAEARALVAGGVREITLLGQNVNAWIGEDAKGRAIGLDGLIRELAKEDGLERIRYTTSHPNDMTDGLIVAHGEVDKLMPFLHLPVQAGSDRILAAMNRSHSVESYLKVIERVREARPDIAISGDFIVGFPGESEADFAATLDIVRATRYAMAYSFKYSRRPGTPAATMDDQIDEAVMNERLQRLQALLNEQQQAFNEATVGRTTRLLLERKGKREGQLIGKSPWLQSVHVTAPGLAIGDMIDVRITSAGPNSLGAEPLMAIA.

Residues 7–121 enclose the MTTase N-terminal domain; it reads KTFHVKSFGC…LPELIARAER (115 aa). 6 residues coordinate [4Fe-4S] cluster: cysteine 16, cysteine 52, cysteine 84, cysteine 158, cysteine 162, and cysteine 165. The Radical SAM core domain occupies 144-376; that stretch reads GNQRPTAFLT…QALLNEQQQA (233 aa). The region spanning 379-441 is the TRAM domain; sequence EATVGRTTRL…PNSLGAEPLM (63 aa).

This sequence belongs to the methylthiotransferase family. MiaB subfamily. In terms of assembly, monomer. Requires [4Fe-4S] cluster as cofactor.

It is found in the cytoplasm. The enzyme catalyses N(6)-dimethylallyladenosine(37) in tRNA + (sulfur carrier)-SH + AH2 + 2 S-adenosyl-L-methionine = 2-methylsulfanyl-N(6)-dimethylallyladenosine(37) in tRNA + (sulfur carrier)-H + 5'-deoxyadenosine + L-methionine + A + S-adenosyl-L-homocysteine + 2 H(+). Its function is as follows. Catalyzes the methylthiolation of N6-(dimethylallyl)adenosine (i(6)A), leading to the formation of 2-methylthio-N6-(dimethylallyl)adenosine (ms(2)i(6)A) at position 37 in tRNAs that read codons beginning with uridine. The polypeptide is tRNA-2-methylthio-N(6)-dimethylallyladenosine synthase (Sphingopyxis alaskensis (strain DSM 13593 / LMG 18877 / RB2256) (Sphingomonas alaskensis)).